A 237-amino-acid polypeptide reads, in one-letter code: Large ribosomal subunit protein uL1 (237 aa).

Belongs to the universal ribosomal protein uL1 family. Part of the 50S ribosomal subunit.

Functionally, binds directly to 23S rRNA. The L1 stalk is quite mobile in the ribosome, and is involved in E site tRNA release. Protein L1 is also a translational repressor protein, it controls the translation of the L11 operon by binding to its mRNA. This Dehalococcoides mccartyi (strain ATCC BAA-2100 / JCM 16839 / KCTC 5957 / BAV1) protein is Large ribosomal subunit protein uL1.